We begin with the raw amino-acid sequence, 333 residues long: NADH-quinone oxidoreductase subunit H (333 aa).

The next 8 helical transmembrane spans lie at 15-35 (FFIFFGLAVLLLFAVLGFVTY), 88-108 (FILAPVIAFAPAFMVLAVIPF), 117-137 (IGVGLLYYIAVSGITTIGVVT), 159-179 (ISYEIPLVMSVIGIVLLAGSL), 191-211 (VWYIFVQPIGFVVFLIAAVAE), 239-259 (WAFFMLSEYVYFFGMASLITV), 274-296 (IPGAVWFALKFSSVVFLLIWFRV), and 313-333 (VLLPIALANIFLTALIKELFF).

This sequence belongs to the complex I subunit 1 family. NDH-1 is composed of 14 different subunits. Subunits NuoA, H, J, K, L, M, N constitute the membrane sector of the complex.

It localises to the cell membrane. It catalyses the reaction a quinone + NADH + 5 H(+)(in) = a quinol + NAD(+) + 4 H(+)(out). NDH-1 shuttles electrons from NADH, via FMN and iron-sulfur (Fe-S) centers, to quinones in the respiratory chain. The immediate electron acceptor for the enzyme in this species is believed to be ubiquinone. Couples the redox reaction to proton translocation (for every two electrons transferred, four hydrogen ions are translocated across the cytoplasmic membrane), and thus conserves the redox energy in a proton gradient. This subunit may bind ubiquinone. This is NADH-quinone oxidoreductase subunit H from Bacillus anthracis (strain A0248).